The chain runs to 334 residues: MTPLDTKRPLQLNDQGQLRHFLSLDGLRRELLTEILDTADSFLEVGARAVKKVPLLRGKTVCNVFFENSTRTRTTFELAAQRLSADVITLNVSTSSASKGETLLDTLRNLEAMAADMFVVRHGDSGAAHFIAEHVCPQVAIINGGDGRHAHPTQGMLDMLTIRRHKGGFENLSVAIVGDILHSRVARSNMLALKTLGCPDIRVIAPKTLLPIGIEQYGVKVYTDMTEGLKDVDVVIMLRLQRERMTGGLLPSEGEFYRLFGLTTARLAGAKPDCIVMHPGPINRGVEIESAVADGPHSVILNQVTYGIAIRMAVLSMAMSGQTAQRQFEQENAQ.

Arginine 71 and threonine 72 together coordinate carbamoyl phosphate. An L-aspartate-binding site is contributed by lysine 99. Carbamoyl phosphate is bound by residues arginine 121, histidine 151, and glutamine 154. 2 residues coordinate L-aspartate: arginine 184 and arginine 239. Carbamoyl phosphate is bound by residues glycine 280 and proline 281.

This sequence belongs to the aspartate/ornithine carbamoyltransferase superfamily. ATCase family. In terms of assembly, heterododecamer (2C3:3R2) of six catalytic PyrB chains organized as two trimers (C3), and six regulatory PyrI chains organized as three dimers (R2).

It catalyses the reaction carbamoyl phosphate + L-aspartate = N-carbamoyl-L-aspartate + phosphate + H(+). The protein operates within pyrimidine metabolism; UMP biosynthesis via de novo pathway; (S)-dihydroorotate from bicarbonate: step 2/3. In terms of biological role, catalyzes the condensation of carbamoyl phosphate and aspartate to form carbamoyl aspartate and inorganic phosphate, the committed step in the de novo pyrimidine nucleotide biosynthesis pathway. This Pseudomonas fluorescens (strain Pf0-1) protein is Aspartate carbamoyltransferase catalytic subunit.